The sequence spans 887 residues: Alanine--tRNA ligase (887 aa).

Zn(2+)-binding residues include His-575, His-579, Cys-677, and His-681.

This sequence belongs to the class-II aminoacyl-tRNA synthetase family. It depends on Zn(2+) as a cofactor.

It localises to the cytoplasm. It carries out the reaction tRNA(Ala) + L-alanine + ATP = L-alanyl-tRNA(Ala) + AMP + diphosphate. Functionally, catalyzes the attachment of alanine to tRNA(Ala) in a two-step reaction: alanine is first activated by ATP to form Ala-AMP and then transferred to the acceptor end of tRNA(Ala). Also edits incorrectly charged Ser-tRNA(Ala) and Gly-tRNA(Ala) via its editing domain. The polypeptide is Alanine--tRNA ligase (Geobacillus kaustophilus (strain HTA426)).